The following is a 187-amino-acid chain: Threonylcarbamoyl-AMP synthase (187 aa).

Residues 4-187 (TLDLDRAVAA…DARSGQILRD (184 aa)) enclose the YrdC-like domain.

Belongs to the SUA5 family. TsaC subfamily.

The protein localises to the cytoplasm. The catalysed reaction is L-threonine + hydrogencarbonate + ATP = L-threonylcarbamoyladenylate + diphosphate + H2O. Required for the formation of a threonylcarbamoyl group on adenosine at position 37 (t(6)A37) in tRNAs that read codons beginning with adenine. Catalyzes the conversion of L-threonine, HCO(3)(-)/CO(2) and ATP to give threonylcarbamoyl-AMP (TC-AMP) as the acyladenylate intermediate, with the release of diphosphate. This chain is Threonylcarbamoyl-AMP synthase, found in Xanthomonas axonopodis pv. citri (strain 306).